Consider the following 478-residue polypeptide: ATP-dependent RNA helicase DDX19A (478 aa).

Ala2 bears the N-acetylalanine mark. The segment at 2–299 (ATDSWALAVD…DPNVIKLKRE (298 aa)) is N-terminal lobe. Lys26 participates in a covalent cross-link: Glycyl lysine isopeptide (Lys-Gly) (interchain with G-Cter in SUMO1); alternate. Lys26 participates in a covalent cross-link: Glycyl lysine isopeptide (Lys-Gly) (interchain with G-Cter in SUMO2); alternate. The residue at position 42 (Thr42) is a Phosphothreonine. The tract at residues 54-67 (DRAAQSLLNKLIRS) is N-terminal helix. Positions 91–119 (KSFEELRLKPQLLQGVYAMGFNRPSKIQE) match the Q motif motif. Residues Gln118 and 137–144 (SQSGTGKT) each bind ATP. The 171-residue stretch at 124-294 (MMLAEPPQNL…QKVVPDPNVI (171 aa)) folds into the Helicase ATP-binding domain. Positions 241-244 (DEAD) match the DEAD box motif. The interval 300–478 (EETLDTIKQY…DLDEIEKIAN (179 aa)) is C-terminal lobe. Residues 305–473 (TIKQYYVLCS…RLDTDDLDEI (169 aa)) form the Helicase C-terminal domain. Residues Arg428 and Arg431 each contribute to the ATP site.

It belongs to the DEAD box helicase family. DDX19/DBP5 subfamily.

It localises to the cytoplasm. Its subcellular location is the nucleus. It is found in the nucleoplasm. It carries out the reaction ATP + H2O = ADP + phosphate + H(+). ATP-dependent RNA helicase involved in mRNA export from the nucleus. Rather than unwinding RNA duplexes, DDX19 functions as a remodeler of ribonucleoprotein particles, whereby proteins bound to nuclear mRNA are dissociated and replaced by cytoplasmic mRNA binding proteins. The sequence is that of ATP-dependent RNA helicase DDX19A (DDX19A) from Homo sapiens (Human).